The following is a 785-amino-acid chain: Cadherin-7 (785 aa).

The N-terminal stretch at 1 to 27 (MKLGKVELCRFLQLIALFLCFSGMNQA) is a signal peptide. Residues 28 to 47 (ELPRSRSKPYFQLGRSRTKR) constitute a propeptide that is removed on maturation. Over 28 to 607 (ELPRSRSKPY…AYILPAGLST (580 aa)) the chain is Extracellular. 5 consecutive Cadherin domains span residues 49 to 153 (WVWN…EPKF), 154 to 262 (LDGP…PPRF), 263 to 377 (PRRS…PPVF), 378 to 482 (SSPL…APEF), and 482 to 599 (FAMD…AEAY). N-linked (GlcNAc...) asparagine glycans are attached at residues asparagine 449 and asparagine 530. A helical transmembrane segment spans residues 608-628 (GALIAILACVLTLLVLILLIV). Over 629–785 (TMKRRKKEPL…YGNGQESLYS (157 aa)) the chain is Cytoplasmic.

The protein localises to the cell membrane. Functionally, cadherins are calcium-dependent cell adhesion proteins. They preferentially interact with themselves in a homophilic manner in connecting cells; cadherins may thus contribute to the sorting of heterogeneous cell types. This is Cadherin-7 (Cdh7) from Rattus norvegicus (Rat).